The chain runs to 335 residues: Coiled-coil domain-containing protein 68 (335 aa).

The stretch at 101–305 (QLLEMNKENE…KTQVALSSET (205 aa)) forms a coiled coil.

Interacts with CEP170. Expressed in bone marrow, colon, small intestine, spleen, testis, trachea and cutaneous T-cell lymphoma (CTCL).

Its subcellular location is the cytoplasm. The protein resides in the cytoskeleton. The protein localises to the microtubule organizing center. It localises to the centrosome. It is found in the centriole. Functionally, centriolar protein required for centriole subdistal appendage assembly and microtubule anchoring in interphase cells. Together with CCDC120, cooperate with subdistal appendage components ODF2, NIN and CEP170 for hierarchical subdistal appendage assembly. In Homo sapiens (Human), this protein is Coiled-coil domain-containing protein 68 (CCDC68).